The following is a 491-amino-acid chain: V-type proton ATPase subunit B 1 (491 aa).

ATP is bound at residue Arg-380.

The protein belongs to the ATPase alpha/beta chains family. V-ATPase is a heteromultimeric enzyme made up of two complexes: the ATP-hydrolytic V1 complex and the proton translocation V0 complex. The V1 complex consists of three catalytic AB heterodimers that form a heterohexamer, three peripheral stalks each consisting of EG heterodimers, one central rotor including subunits D and F, and the regulatory subunits C and H. The proton translocation complex V0 consists of the proton transport subunit a, a ring of proteolipid subunits c9c'', rotary subunit d, subunits e and f, and the accessory subunits vah-19/Ac45 and vah-20/PRR. Expressed ubiquitously. Highly expressed in the H-shaped excretory cell, the excretory pore, the intestine, and hypodermal cells. Expressed in the nervous system. Expressed at low levels in muscles.

Functionally, non-catalytic subunit of the V1 complex of vacuolar(H+)-ATPase (V-ATPase), a multisubunit enzyme composed of a peripheral complex (V1) that hydrolyzes ATP and a membrane integral complex (V0) that translocates protons. V-ATPase is responsible for acidifying and maintaining the pH of intracellular compartments and in some cell types, is targeted to the plasma membrane, where it is responsible for acidifying the extracellular environment. Essential for the proper assembly and activity of V-ATPase. Required maternally for early embryogenesis and zygotically during morphogenesis. Specifically, involved in the clearance of apoptotic cell corpses in embryos. Also, during embryonic development, the V-ATPase is required to repress fusion of epidermal cells probably by negatively regulating eff-1-mediated cell fusion. In neurons, required for necrotic cell death by promoting intracellular acidification. Required for cell death induced by hypoxia. Required for acidification of synaptic vesicles and the release of neurotransmitters from adult neurons. The protein is V-type proton ATPase subunit B 1 of Caenorhabditis elegans.